The following is a 383-amino-acid chain: Probable lipid transporter atnI (383 aa).

2 helical membrane-spanning segments follow: residues 46–66 (VLFS…AIMF) and 71–91 (AWVV…RSLF). Residue N94 is glycosylated (N-linked (GlcNAc...) asparagine). 5 consecutive transmembrane segments (helical) span residues 104–124 (FTIF…MTLG), 144–164 (FGHI…VGAA), 182–202 (IYMG…GLFI), 231–251 (WLFY…IFRL), and 269–289 (WFEY…LNVA). Residues 305 to 383 (VSRKEKKQRK…YDNRGNEVRP (79 aa)) are disordered. Positions 307–316 (RKEKKQRKRE) are enriched in basic residues. Basic and acidic residues predominate over residues 317-329 (KKEAKIAEKEAKK).

Belongs to the lipid-translocating exporter (LTE) (TC 9.A.26.1) family.

It is found in the membrane. It functions in the pathway secondary metabolite biosynthesis. Functionally, probable lipid transporter; part of the gene cluster that mediates the biosynthesis of aspercryptins, linear lipopeptides built from six amino acids including 2 highly unusual and nonproteogenic amino acids, 2-amino-octanoic acid (2aoa) and 2-amino-dodecanol (2adol). The core structure of aspercryptins is as follows: Ser/Ala-Thr-Ile/Val-2aoa-Asn-2adol. The first step of aspercryptin biosynthesis is the generation of the fatty acid precursors, octanoic and dodecanoic acids, by the FAS subunits atnF and atnM. The fatty acid precursors are likely transformed into the corresponding alpha-amino fatty acids in three steps. First, they are hydroxylated by the cytochrome P450 monooxygenase atnE, then oxidized to the corresponding alpha-keto acids by the NAD(P)-dependent oxidoreductase atnD, and finally converted to the alpha-amino fatty acids by the PLP-dependent aminotransferases atnH or atnJ. the alpha-amino fatty acids, 2-amino-octanoic and 2-amino-dodecanoic acids, are recognized, activated, and covalently tethered to the NRPS atnA by its fourth and sixth adenylation domains. The second module of atnA is the Thr module and contains an epimerase (E) domain responsible for the epimerization of Thr to D-allo-Thr. Additionally, despite atnA having only one epimerase domain, the first amino acid of aspercryptin A1 is D-Ser, suggesting that serine is either loaded directly as D-Ser on the first module or that the epimerase domain in the threonine module epimerizes both L-Ser and L-Thr. After condensation of the hexapeptide of aspercryptin, the C-terminal reductase (TE) domain might be involved in the reductive release and production of the aldehyde hexapeptide. Further reduction would generate aspercryptins. The variety of aspercryptins produced reflects the flexibility of the atnA NRPS, allowing incorporation of alanine instead of serine, valine for isoleucine, and a C10 fatty amino alcohol instead of the C12 version. AtnB seems to be involved in the selectivity for Ile versus Val by the third module. Moreover, type B, C and D aspercryptins have an additional N-terminal cichorine, acetyl and propionyl group respectively. This is Probable lipid transporter atnI from Emericella nidulans (strain FGSC A4 / ATCC 38163 / CBS 112.46 / NRRL 194 / M139) (Aspergillus nidulans).